A 256-amino-acid polypeptide reads, in one-letter code: Dihydroorotate dehydrogenase B (NAD(+)), electron transfer subunit (256 aa).

Positions 1 to 101 (MKKAHLTVQS…LGPLGNGFPV (101 aa)) constitute an FAD-binding FR-type domain. Residues 52–55 (RPLS), 69–71 (IYR), and 76–77 (GT) each bind FAD. Cysteine 220, cysteine 225, cysteine 228, and cysteine 243 together coordinate [2Fe-2S] cluster.

Belongs to the PyrK family. Heterotetramer of 2 PyrK and 2 PyrD type B subunits. The cofactor is [2Fe-2S] cluster. FAD is required as a cofactor.

It functions in the pathway pyrimidine metabolism; UMP biosynthesis via de novo pathway; orotate from (S)-dihydroorotate (NAD(+) route): step 1/1. Its function is as follows. Responsible for channeling the electrons from the oxidation of dihydroorotate from the FMN redox center in the PyrD type B subunit to the ultimate electron acceptor NAD(+). The chain is Dihydroorotate dehydrogenase B (NAD(+)), electron transfer subunit from Bacillus velezensis (strain DSM 23117 / BGSC 10A6 / LMG 26770 / FZB42) (Bacillus amyloliquefaciens subsp. plantarum).